The primary structure comprises 66 residues: Hirudin-PA (66 aa).

Residues 1–3 (ITY) form an interaction with thrombin active site region. Intrachain disulfides connect cysteine 6/cysteine 14, cysteine 16/cysteine 28, and cysteine 22/cysteine 39. The segment at 39 to 66 (CVTGEGTPKPQSHNQGDFEPIPEDAYDE) is disordered. A glycan (O-linked (GalNAc...) threonine) is linked at threonine 45. The segment at 55 to 66 (DFEPIPEDAYDE) is interaction with fibrinogen-binding exosite of thrombin. A Sulfotyrosine modification is found at tyrosine 64.

This sequence belongs to the protease inhibitor I14 (hirudin) family.

The protein localises to the secreted. In terms of biological role, hirudin is a potent thrombin-specific protease inhibitor. It forms a stable non-covalent complex with alpha-thrombin, thereby abolishing its ability to cleave fibrinogen. The protein is Hirudin-PA of Hirudo medicinalis (Medicinal leech).